Consider the following 165-residue polypeptide: Interferon gamma (165 aa).

A signal peptide spans 1–23; the sequence is MKYTSYILAFQLCIVLGSLGCYC. Gln-24 carries the post-translational modification Pyrrolidone carboxylic acid. N-linked (GlcNAc...) asparagine glycans are attached at residues Asn-48 and Asn-120.

Belongs to the type II (or gamma) interferon family. In terms of assembly, homodimer. Interacts with IFNGR1 (via extracellular domain); this interaction promotes IFNGR1 dimerization.

Its subcellular location is the secreted. Functionally, type II interferon produced by immune cells such as T-cells and NK cells that plays crucial roles in antimicrobial, antiviral, and antitumor responses by activating effector immune cells and enhancing antigen presentation. Primarily signals through the JAK-STAT pathway after interaction with its receptor IFNGR1 to affect gene regulation. Upon IFNG binding, IFNGR1 intracellular domain opens out to allow association of downstream signaling components JAK2, JAK1 and STAT1, leading to STAT1 activation, nuclear translocation and transcription of IFNG-regulated genes. Many of the induced genes are transcription factors such as IRF1 that are able to further drive regulation of a next wave of transcription. Plays a role in class I antigen presentation pathway by inducing a replacement of catalytic proteasome subunits with immunoproteasome subunits. In turn, increases the quantity, quality, and repertoire of peptides for class I MHC loading. Increases the efficiency of peptide generation also by inducing the expression of activator PA28 that associates with the proteasome and alters its proteolytic cleavage preference. Up-regulates as well MHC II complexes on the cell surface by promoting expression of several key molecules such as cathepsins B/CTSB, H/CTSH, and L/CTSL. Participates in the regulation of hematopoietic stem cells during development and under homeostatic conditions by affecting their development, quiescence, and differentiation. The polypeptide is Interferon gamma (IFNG) (Papio anubis (Olive baboon)).